Reading from the N-terminus, the 432-residue chain is Trigger factor (432 aa).

The PPIase FKBP-type domain occupies 161 to 246 (GKRVSIDFVG…VNKVEARQLP (86 aa)).

Belongs to the FKBP-type PPIase family. Tig subfamily.

It localises to the cytoplasm. It catalyses the reaction [protein]-peptidylproline (omega=180) = [protein]-peptidylproline (omega=0). Its function is as follows. Involved in protein export. Acts as a chaperone by maintaining the newly synthesized protein in an open conformation. Functions as a peptidyl-prolyl cis-trans isomerase. This is Trigger factor from Vibrio vulnificus (strain YJ016).